The chain runs to 65 residues: Large ribosomal subunit protein bL33c (65 aa).

This sequence belongs to the bacterial ribosomal protein bL33 family.

The protein localises to the plastid. It is found in the chloroplast. The chain is Large ribosomal subunit protein bL33c from Zygnema circumcarinatum (Green alga).